Consider the following 152-residue polypeptide: Endoribonuclease YbeY (152 aa).

Residues histidine 116, histidine 120, and histidine 126 each contribute to the Zn(2+) site.

It belongs to the endoribonuclease YbeY family. It depends on Zn(2+) as a cofactor.

Its subcellular location is the cytoplasm. In terms of biological role, single strand-specific metallo-endoribonuclease involved in late-stage 70S ribosome quality control and in maturation of the 3' terminus of the 16S rRNA. The sequence is that of Endoribonuclease YbeY from Mycoplasma mobile (strain ATCC 43663 / 163K / NCTC 11711) (Mesomycoplasma mobile).